Reading from the N-terminus, the 208-residue chain is Thiamine-phosphate synthase (208 aa).

4-amino-2-methyl-5-(diphosphooxymethyl)pyrimidine contacts are provided by residues 38-42 (QYRSK) and N70. Mg(2+)-binding residues include D71 and D90. 4-amino-2-methyl-5-(diphosphooxymethyl)pyrimidine is bound at residue T109. Residue 136–138 (SAT) coordinates 2-[(2R,5Z)-2-carboxy-4-methylthiazol-5(2H)-ylidene]ethyl phosphate. K139 lines the 4-amino-2-methyl-5-(diphosphooxymethyl)pyrimidine pocket. 2-[(2R,5Z)-2-carboxy-4-methylthiazol-5(2H)-ylidene]ethyl phosphate is bound by residues G166 and 186-187 (VS).

This sequence belongs to the thiamine-phosphate synthase family. Mg(2+) serves as cofactor.

It carries out the reaction 2-[(2R,5Z)-2-carboxy-4-methylthiazol-5(2H)-ylidene]ethyl phosphate + 4-amino-2-methyl-5-(diphosphooxymethyl)pyrimidine + 2 H(+) = thiamine phosphate + CO2 + diphosphate. The catalysed reaction is 2-(2-carboxy-4-methylthiazol-5-yl)ethyl phosphate + 4-amino-2-methyl-5-(diphosphooxymethyl)pyrimidine + 2 H(+) = thiamine phosphate + CO2 + diphosphate. It catalyses the reaction 4-methyl-5-(2-phosphooxyethyl)-thiazole + 4-amino-2-methyl-5-(diphosphooxymethyl)pyrimidine + H(+) = thiamine phosphate + diphosphate. It functions in the pathway cofactor biosynthesis; thiamine diphosphate biosynthesis; thiamine phosphate from 4-amino-2-methyl-5-diphosphomethylpyrimidine and 4-methyl-5-(2-phosphoethyl)-thiazole: step 1/1. Functionally, condenses 4-methyl-5-(beta-hydroxyethyl)thiazole monophosphate (THZ-P) and 2-methyl-4-amino-5-hydroxymethyl pyrimidine pyrophosphate (HMP-PP) to form thiamine monophosphate (TMP). This is Thiamine-phosphate synthase from Aromatoleum aromaticum (strain DSM 19018 / LMG 30748 / EbN1) (Azoarcus sp. (strain EbN1)).